The primary structure comprises 102 residues: Small ribosomal subunit protein uS10 (102 aa).

It belongs to the universal ribosomal protein uS10 family. In terms of assembly, part of the 30S ribosomal subunit.

Involved in the binding of tRNA to the ribosomes. The sequence is that of Small ribosomal subunit protein uS10 from Methanosphaera stadtmanae (strain ATCC 43021 / DSM 3091 / JCM 11832 / MCB-3).